A 271-amino-acid chain; its full sequence is Vacuolar arginine/histidine antiporter stm1 (271 aa).

Positions 14-80 (LTELSSFLGA…GNVSSTVLVL (67 aa)) constitute a PQ-loop 1 domain. The next 3 helical transmembrane spans lie at 17–37 (LSSFLGALSLGCWVVLLIPQL), 49–69 (ISDLFLIIWLIGDFFNVLGSI), and 77–97 (VLVLSFYYIVSDSTLLMQIYY). S119 bears the Phosphoserine mark. A run of 4 helical transmembrane segments spans residues 144 to 164 (FGVMGCVVIVSTIVGNLIISS), 178 to 198 (PFTAGCISSVLYFCARIPQII), 211 to 231 (IIFFVLASVGNTSYAFSILVF), and 245 to 265 (PWILGAFSTIFLDIYIFYQFI). The region spanning 185–239 (SSVLYFCARIPQIIKNHKAKSTEGLSIIFFVLASVGNTSYAFSILVFPASDYLNY) is the PQ-loop 2 domain.

Belongs to the laat-1 family.

The protein localises to the vacuole membrane. The catalysed reaction is L-histidine(out) + L-arginine(in) = L-histidine(in) + L-arginine(out). Amino acid transporter that moves basic amino acids across the vacuolar membrane. Appears to function as an arginine/histidine antiporter. This is Vacuolar arginine/histidine antiporter stm1 (stm1) from Schizosaccharomyces pombe (strain 972 / ATCC 24843) (Fission yeast).